Consider the following 734-residue polypeptide: Casein kinase II subunit alpha'-interacting protein (734 aa).

Residues serine 608 to proline 654 are disordered. Positions serine 612–proline 654 are enriched in low complexity.

As to quaternary structure, interacts (via C-terminus) with CSNK2A2. Post-translationally, phosphorylated by CK2 (casein kinase II), specifically by complexes containing catalytic subunit CSNK2A2.

The protein localises to the nucleus. Its function is as follows. May play a role in chromatin regulation of male germ cells. The chain is Casein kinase II subunit alpha'-interacting protein from Homo sapiens (Human).